A 68-amino-acid chain; its full sequence is Serine rich endogenous peptide 13 (68 aa).

Residues 1 to 31 form the signal peptide; sequence MATKASNLVVFLLSLLLLFLLISFQVGVADA. The disordered stretch occupies residues 33 to 68; that stretch reads RNKRQGQEQRVDYDYPRPPTAPIYLPPSKSRKGKGP. The segment covering 37 to 47 has biased composition (basic and acidic residues); that stretch reads QGQEQRVDYDY. Pro residues predominate over residues 48–57; it reads PRPPTAPIYL. Positions 54–68 match the SCOOP motif motif; that stretch reads PIYLPPSKSRKGKGP. The SxS motif essential for MIK2 binding signature appears at 60–62; sequence SKS.

This sequence belongs to the serine rich endogenous peptide (SCOOP) phytocytokine family. In terms of assembly, interacts with MIK2 (via extracellular leucine-rich repeat domain); this interaction triggers the formation of complex between MIK2 and the BAK1/SERK3 and SERK4 coreceptors, and subsequent BAK1 activation by phosphorylation. In terms of tissue distribution, mostly expressed in stems and flowers and, to a lower extent, in seedlings shoots, roots, siliques, seeds and leaves.

Its subcellular location is the cell membrane. It localises to the secreted. The protein localises to the extracellular space. The protein resides in the apoplast. Its function is as follows. Brassicaceae-specific phytocytokine (plant endogenous peptide released into the apoplast) perceived by MIK2 in a BAK1/SERK3 and SERK4 coreceptors-dependent manner, that modulates various physiological and antimicrobial processes including growth prevention and reactive oxygen species (ROS) response regulation. Promotes the expression of immune-related marker genes (e.g. WRKY30, WRKY33 and CYP81F2) in a MIK2-dependent manner. Inhibits root growth and regulates root meristems. Prevents general growth and development. Exhibits antibacterial effects against Pseudomonas syringae pv. tomato DC3000, Ralstonia solanacearum, Bacillus subtilis and Agrobacterium tumefaciens, thus being an antimicrobial peptide (AMP). This is Serine rich endogenous peptide 13 from Arabidopsis thaliana (Mouse-ear cress).